A 170-amino-acid polypeptide reads, in one-letter code: MFRTLLSSTVRSIQLKPVTSTLSTTIPSITSIPTVSYFSTSPINYKTNTSTRTKENVHDLTTFLTLIGRNSIEYKDLFEDDLNKFLSTTSAQMKNMGIDTRARRYLLRWRHKFLNDLEPLREHKLGKKRNGGERKAKTVIAKRQALERLEEKEKWAQEELEAEKRGERLF.

Residues 1-20 constitute a mitochondrion transit peptide; that stretch reads MFRTLLSSTVRSIQLKPVTS.

It belongs to the mitochondrion-specific ribosomal protein mS41 family. Component of the mitochondrial small ribosomal subunit (mt-SSU).

The protein localises to the mitochondrion. Component of the mitochondrial ribosome (mitoribosome), a dedicated translation machinery responsible for the synthesis of mitochondrial genome-encoded proteins, including at least some of the essential transmembrane subunits of the mitochondrial respiratory chain. The mitoribosomes are attached to the mitochondrial inner membrane and translation products are cotranslationally integrated into the membrane. mS41 is involved in telomere length regulation. The protein is Small ribosomal subunit protein mS41 (FYV4) of Candida albicans (strain SC5314 / ATCC MYA-2876) (Yeast).